A 218-amino-acid polypeptide reads, in one-letter code: Ras-related protein R-Ras (218 aa).

Residues 1–30 are disordered; it reads MSSGAASGTGRGRPRGGGPGPRDPPPGETH. Over residues 7 to 20 the composition is skewed to gly residues; the sequence is SGTGRGRPRGGGPG. 36–44 contacts GTP; the sequence is GGGGVGKSA. The short motif at 58 to 66 is the Effector region element; that stretch reads YDPTIEDSY. GTP-binding positions include 83-87, 142-145, and 172-174; these read DTAGQ, NKAD, and SAK. Cys215 carries the cysteine methyl ester modification. Cys215 is lipidated: S-geranylgeranyl cysteine. The propeptide at 216–218 is removed in mature form; sequence VLL.

The protein belongs to the small GTPase superfamily. Ras family. As to quaternary structure, interacts with PLCE1. Interacts (active GTP-bound form preferentially) with RGS14. Interacts with OSBPL3. Interacts with ZDHHC19. Post-translationally, S-palmitoylated by ZDHHC19, leading to increased association with membranes and with rafts/caveolae as well as enhanced cell viability.

Its subcellular location is the cell membrane. It carries out the reaction GTP + H2O = GDP + phosphate + H(+). Functionally, GTP-binding protein with GTPase activity, likely involved in the regulation of MAPK signaling pathway and thereby controlling multiple cellular processes. Regulates the organization of the actin cytoskeleton. With OSPBL3, modulates integrin beta-1 (ITGB1) activity. In Mus musculus (Mouse), this protein is Ras-related protein R-Ras (Rras).